An 813-amino-acid polypeptide reads, in one-letter code: Sodium/hydrogen exchanger 2 (813 aa).

7 consecutive transmembrane segments (helical) span residues 108–128, 139–159, 170–190, 210–230, 238–258, 279–299, and 309–329; these read IVPESCLLIMVGLLLGGIIFG, TDVFFLYLLPPIVLDAGYFMP, IFWYAVVGTLWNSIGIGLSLF, LFGSLISAVDPVAVLAVFENI, ILVFGESLLNDAVTVVLYNLF, FFVVGIGGVLIGILLGFIAAF, and VIEPLFVFLYSYLSYITAEMF. Residue Asn351 is glycosylated (N-linked (GlcNAc...) asparagine). Helical transmembrane passes span 362–382, 393–413, 431–451, and 460–480; these read YFMKMLSSVSETLIFIFMGVS, AFVCFTLAFCLIWRALGVFVL, FIIAYGGLRGAICFALVFLLP, and LFITAAIVVIFFTVFILGITI. Residues 649–661 show a composition bias toward basic and acidic residues; sequence LRKDNSLNRERRA. 2 disordered regions span residues 649-709 and 736-813; these read LRKD…NLQP and DVGS…NEKP. Over residues 687 to 696 the composition is skewed to polar residues; sequence VSNADGNSSD. Composition is skewed to basic and acidic residues over residues 770-781 and 797-813; these read KDQRFGRGREDS and RASEPGNRKGRLGNEKP.

This sequence belongs to the monovalent cation:proton antiporter 1 (CPA1) transporter (TC 2.A.36) family. As to quaternary structure, interacts with CHP1 and CHP2. Predominantly in small intestine, colon, and stomach, with much lower levels in skeletal muscle, kidney, brain, testis, uterus, heart and lung.

The protein resides in the apical cell membrane. The enzyme catalyses Na(+)(in) + H(+)(out) = Na(+)(out) + H(+)(in). Li(+) activates Na(+)/H(+) exchanger. Functionally, plasma membrane Na(+)/H(+) antiporter. Mediates the electroneutral exchange of intracellular H(+) ions for extracellular Na(+). Major apical Na(+)/H(+) exchanger in the base of the colonic crypt. Controls in the colonic crypt intracellular pH (pHi) to direct colonic epithelial cell differentiation into the absorptive enterocyte lineage at the expense of the secretory lineage. The protein is Sodium/hydrogen exchanger 2 (Slc9a2) of Rattus norvegicus (Rat).